The chain runs to 470 residues: Glutamate--tRNA ligase 2 (470 aa).

A 'HIGH' region motif is present at residues Pro11–Gly21. A 'KMSKS' region motif is present at residues Lys238–Arg242. Residue Lys241 participates in ATP binding.

Belongs to the class-I aminoacyl-tRNA synthetase family. Glutamate--tRNA ligase type 1 subfamily. Monomer.

Its subcellular location is the cytoplasm. It carries out the reaction tRNA(Glu) + L-glutamate + ATP = L-glutamyl-tRNA(Glu) + AMP + diphosphate. Functionally, catalyzes the attachment of glutamate to tRNA(Glu) in a two-step reaction: glutamate is first activated by ATP to form Glu-AMP and then transferred to the acceptor end of tRNA(Glu). The protein is Glutamate--tRNA ligase 2 of Ehrlichia ruminantium (strain Gardel).